A 280-amino-acid chain; its full sequence is uncharacterized protein (280 aa).

Helical transmembrane passes span 6-26 (YLVI…TPLV), 38-58 (VLAI…YLFP), 79-99 (IFLL…VFLK), 105-125 (GVLA…ELIF), 144-164 (NQIY…IILW), 171-191 (ISFF…ALMV), and 231-251 (LVFI…TLFA).

The protein resides in the cell membrane. This is an uncharacterized protein from Mycoplasma genitalium (strain ATCC 33530 / DSM 19775 / NCTC 10195 / G37) (Mycoplasmoides genitalium).